The chain runs to 344 residues: tRNA N6-adenosine threonylcarbamoyltransferase (344 aa).

Fe cation contacts are provided by histidine 113 and histidine 117. Residues 135–139 (LVSGG), aspartate 169, glycine 182, aspartate 186, and asparagine 278 contribute to the substrate site. Aspartate 306 lines the Fe cation pocket.

Belongs to the KAE1 / TsaD family. Requires Fe(2+) as cofactor.

It is found in the cytoplasm. It carries out the reaction L-threonylcarbamoyladenylate + adenosine(37) in tRNA = N(6)-L-threonylcarbamoyladenosine(37) in tRNA + AMP + H(+). Its function is as follows. Required for the formation of a threonylcarbamoyl group on adenosine at position 37 (t(6)A37) in tRNAs that read codons beginning with adenine. Is involved in the transfer of the threonylcarbamoyl moiety of threonylcarbamoyl-AMP (TC-AMP) to the N6 group of A37, together with TsaE and TsaB. TsaD likely plays a direct catalytic role in this reaction. This Corynebacterium efficiens (strain DSM 44549 / YS-314 / AJ 12310 / JCM 11189 / NBRC 100395) protein is tRNA N6-adenosine threonylcarbamoyltransferase.